The primary structure comprises 490 residues: Endoglucanase 13 (490 aa).

Residues 1–26 (MSQLKNGSSQCLWTSICIVLIVMSMA) form the signal peptide. Asparagine 6 is a glycosylation site (N-linked (GlcNAc...) asparagine). Catalysis depends on aspartate 86, which acts as the Nucleophile. Catalysis depends on residues histidine 412, aspartate 464, and glutamate 473.

This sequence belongs to the glycosyl hydrolase 9 (cellulase E) family.

The protein localises to the secreted. The catalysed reaction is Endohydrolysis of (1-&gt;4)-beta-D-glucosidic linkages in cellulose, lichenin and cereal beta-D-glucans.. The chain is Endoglucanase 13 from Arabidopsis thaliana (Mouse-ear cress).